The primary structure comprises 380 residues: Probable inorganic pyrophosphatase (380 aa).

Residues Asp198, Asp203, and Asp235 each coordinate Mg(2+).

Belongs to the PPase family. The cofactor is Mg(2+).

It carries out the reaction diphosphate + H2O = 2 phosphate + H(+). The chain is Probable inorganic pyrophosphatase from Plasmodium falciparum (isolate 3D7).